Here is a 111-residue protein sequence, read N- to C-terminus: BET1-like protein (111 aa).

Topologically, residues 1–86 are cytoplasmic; that stretch reads MADWTRAQSS…VARSGRDTRK (86 aa). Ser-9 and Ser-37 each carry phosphoserine. One can recognise a t-SNARE coiled-coil homology domain in the interval 15–77; it reads EIVDRENKRM…TGSVKRFSTV (63 aa). A helical; Anchor for type IV membrane protein membrane pass occupies residues 87 to 107; that stretch reads LLCGMAVVLIVAFFILSYLFS. Over 108-111 the chain is Vesicular; sequence RTRT.

As to quaternary structure, component of a SNARE complex consisting of STX5, YKT6, GOSR1 and BET1L. Interacts with STX5. As to expression, widely expressed. Highest levels in heart, liver, skeletal muscle and kidney.

It is found in the golgi apparatus membrane. The protein localises to the golgi apparatus. Its subcellular location is the trans-Golgi network membrane. Its function is as follows. Vesicle SNARE required for targeting and fusion of retrograde transport vesicles with the Golgi complex. Required for the integrity of the Golgi complex. This chain is BET1-like protein, found in Rattus norvegicus (Rat).